Reading from the N-terminus, the 601-residue chain is Glutamyl-tRNA(Gln) amidotransferase subunit B, mitochondrial (601 aa).

A mitochondrion-targeting transit peptide spans 1–52; sequence MLQQWLRQSPGAARFLRGSCCRGPQSGSLRHSPLPTAPHRCIRSLQTSATES.

It belongs to the GatB/GatE family. GatB subfamily. In terms of assembly, subunit of the heterotrimeric GatCAB amidotransferase (AdT) complex, composed of A, B and C subunits.

The protein localises to the mitochondrion. It carries out the reaction L-glutamyl-tRNA(Gln) + L-glutamine + ATP + H2O = L-glutaminyl-tRNA(Gln) + L-glutamate + ADP + phosphate + H(+). Its function is as follows. Allows the formation of correctly charged Gln-tRNA(Gln) through the transamidation of misacylated Glu-tRNA(Gln) in the mitochondria. The reaction takes place in the presence of glutamine and ATP through an activated gamma-phospho-Glu-tRNA(Gln). In Neosartorya fischeri (strain ATCC 1020 / DSM 3700 / CBS 544.65 / FGSC A1164 / JCM 1740 / NRRL 181 / WB 181) (Aspergillus fischerianus), this protein is Glutamyl-tRNA(Gln) amidotransferase subunit B, mitochondrial.